The sequence spans 407 residues: Myeloid cell nuclear differentiation antigen (407 aa).

The Pyrin domain occupies 1 to 88 (MVNEYKKILL…VNNLRKEKSK (88 aa)). The disordered stretch occupies residues 108 to 207 (EVGLAAPAPT…RQVDARRNVP (100 aa)). The Nuclear localization signal motif lies at 131–137 (PVAQKRK). Positions 139-148 (PNKEKTEAKR) are enriched in basic and acidic residues. Over residues 177 to 190 (QTSSSTPSNTSFTP) the composition is skewed to low complexity. Positions 196 to 394 (AQRQVDARRN…CGSHSFIKVI (199 aa)) constitute an HIN-200 domain.

In terms of assembly, participates in a ternary complex with YY1 and the YY1 target DNA element. Binds nucleolin and nucleophosmin/NPM/B23. Expressed constitutively in cells of the myeloid lineage. Found in promyelocyte stage cells as well as in all other stage cells including peripheral blood monocytes and granulocytes. Also appears in myeloblast cells in some cases of acute myeloid Leukemia.

The protein localises to the nucleus. It is found in the cytoplasm. May act as a transcriptional activator/repressor in the myeloid lineage. Plays a role in the granulocyte/monocyte cell-specific response to interferon. Stimulates the DNA binding of the transcriptional repressor protein YY1. The polypeptide is Myeloid cell nuclear differentiation antigen (MNDA) (Homo sapiens (Human)).